A 324-amino-acid polypeptide reads, in one-letter code: tRNA pseudouridine synthase B (324 aa).

Histidine 43 is a substrate binding site. Aspartate 48 functions as the Nucleophile in the catalytic mechanism. Substrate contacts are provided by tyrosine 76, tyrosine 179, and leucine 200.

This sequence belongs to the pseudouridine synthase TruB family. Type 1 subfamily.

The enzyme catalyses uridine(55) in tRNA = pseudouridine(55) in tRNA. Its function is as follows. Responsible for synthesis of pseudouridine from uracil-55 in the psi GC loop of transfer RNAs. In Yersinia pestis bv. Antiqua (strain Nepal516), this protein is tRNA pseudouridine synthase B.